We begin with the raw amino-acid sequence, 286 residues long: Protein MGF 360-3L (286 aa).

A helical transmembrane segment spans residues 1-17 (MKVLLELLLGYSVLILA). N61 is a glycosylation site (N-linked (GlcNAc...) asparagine; by host). 2 helical membrane-spanning segments follow: residues 128-148 (HCCFYLVFSIAFVGYIVFVYN) and 153-173 (LNTTMKLLALLSILIWLSQPA). N-linked (GlcNAc...) asparagine; by host glycans are attached at residues N238 and N263.

This sequence belongs to the asfivirus MGF 110 family.

The protein resides in the host membrane. Functionally, plays a role in virus cell tropism, and may be required for efficient virus replication in macrophages. This chain is Protein MGF 360-3L, found in African swine fever virus (isolate Tick/Malawi/Lil 20-1/1983) (ASFV).